A 971-amino-acid chain; its full sequence is Exportin-2 (971 aa).

At M1 the chain carries N-acetylmethionine. The region spanning 29–102 (AEKFLESVEG…KANIVHLMLS (74 aa)) is the Importin N-terminal domain. S112 carries the phosphoserine modification. 2 positions are modified to N6-acetyllysine: K574 and K824. Residue S931 is modified to Phosphoserine.

This sequence belongs to the XPO2/CSE1 family. As to quaternary structure, found in a complex with CSE1L/XPO2, Ran and KPNA2. Binds with high affinity to importin-alpha only in the presence of RanGTP. The complex is dissociated by the combined action of RanBP1 and RanGAP1. Interacts with CFTR.

Its subcellular location is the cytoplasm. The protein localises to the nucleus. Its function is as follows. Export receptor for importin-alpha. Mediates importin-alpha re-export from the nucleus to the cytoplasm after import substrates (cargos) have been released into the nucleoplasm. In the nucleus binds cooperatively to importin-alpha and to the GTPase Ran in its active GTP-bound form. Docking of this trimeric complex to the nuclear pore complex (NPC) is mediated through binding to nucleoporins. Upon transit of a nuclear export complex into the cytoplasm, disassembling of the complex and hydrolysis of Ran-GTP to Ran-GDP (induced by RANBP1 and RANGAP1, respectively) cause release of the importin-alpha from the export receptor. CSE1L/XPO2 then return to the nuclear compartment and mediate another round of transport. The directionality of nuclear export is thought to be conferred by an asymmetric distribution of the GTP- and GDP-bound forms of Ran between the cytoplasm and nucleus. The chain is Exportin-2 (CSE1L) from Pongo abelii (Sumatran orangutan).